The chain runs to 289 residues: Pantoate kinase (289 aa).

This sequence belongs to the GHMP kinase family. PoK subfamily.

The enzyme catalyses (R)-pantoate + ATP = (R)-4-phosphopantoate + ADP + H(+). It functions in the pathway cofactor biosynthesis; coenzyme A biosynthesis. Functionally, phosphorylates (R)-pantoate to form (R)-4-phosphopantoate in the CoA biosynthesis pathway. ATP is the best phosphate donor. Can be replaced with UTP, with lower efficiency. The sequence is that of Pantoate kinase from Methanospirillum hungatei JF-1 (strain ATCC 27890 / DSM 864 / NBRC 100397 / JF-1).